The primary structure comprises 338 residues: 1-aminocyclopropane-1-carboxylate deaminase (338 aa).

The residue at position 51 (Lys-51) is an N6-(pyridoxal phosphate)lysine. Residue Ser-78 is the Nucleophile of the active site.

It belongs to the ACC deaminase/D-cysteine desulfhydrase family. Homotrimer. It depends on pyridoxal 5'-phosphate as a cofactor.

It carries out the reaction 1-aminocyclopropane-1-carboxylate + H2O = 2-oxobutanoate + NH4(+). Functionally, catalyzes a cyclopropane ring-opening reaction, the irreversible conversion of 1-aminocyclopropane-1-carboxylate (ACC) to ammonia and alpha-ketobutyrate. Allows growth on ACC as a nitrogen source. This chain is 1-aminocyclopropane-1-carboxylate deaminase, found in Ralstonia pickettii (strain 12J).